A 310-amino-acid polypeptide reads, in one-letter code: Thioredoxin reductase (310 aa).

35-42 contacts FAD; sequence ERGMPGGQ. The cysteines at positions 134 and 137 are disulfide-linked. Residue 277–286 coordinates FAD; sequence DVRDKGLRQI.

Belongs to the class-II pyridine nucleotide-disulfide oxidoreductase family. As to quaternary structure, homodimer. It depends on FAD as a cofactor.

Its subcellular location is the cytoplasm. The catalysed reaction is [thioredoxin]-dithiol + NADP(+) = [thioredoxin]-disulfide + NADPH + H(+). The polypeptide is Thioredoxin reductase (trxB) (Staphylococcus epidermidis (strain ATCC 35984 / DSM 28319 / BCRC 17069 / CCUG 31568 / BM 3577 / RP62A)).